We begin with the raw amino-acid sequence, 180 residues long: ATP synthase subunit delta (180 aa).

The protein belongs to the ATPase delta chain family. As to quaternary structure, F-type ATPases have 2 components, F(1) - the catalytic core - and F(0) - the membrane proton channel. F(1) has five subunits: alpha(3), beta(3), gamma(1), delta(1), epsilon(1). CF(0) has four main subunits: a(1), b(1), b'(1) and c(10-14). The alpha and beta chains form an alternating ring which encloses part of the gamma chain. F(1) is attached to F(0) by a central stalk formed by the gamma and epsilon chains, while a peripheral stalk is formed by the delta, b and b' chains.

Its subcellular location is the cellular thylakoid membrane. Its function is as follows. F(1)F(0) ATP synthase produces ATP from ADP in the presence of a proton or sodium gradient. F-type ATPases consist of two structural domains, F(1) containing the extramembraneous catalytic core and F(0) containing the membrane proton channel, linked together by a central stalk and a peripheral stalk. During catalysis, ATP synthesis in the catalytic domain of F(1) is coupled via a rotary mechanism of the central stalk subunits to proton translocation. Functionally, this protein is part of the stalk that links CF(0) to CF(1). It either transmits conformational changes from CF(0) to CF(1) or is implicated in proton conduction. This is ATP synthase subunit delta from Prochlorococcus marinus (strain MIT 9312).